We begin with the raw amino-acid sequence, 388 residues long: GTPase Obg (388 aa).

In terms of domain architecture, Obg spans 1–159 (MKFVDEAVIR…RSLKLELLLL (159 aa)). In terms of domain architecture, OBG-type G spans 160–333 (ADVGLLGMPN…LATKLLDFIQ (174 aa)). Residues 166–173 (GMPNAGKS), 191–195 (FTTLV), 213–216 (DIPG), 283–286 (NKAD), and 314–316 (SAY) each bind GTP. Mg(2+) is bound by residues serine 173 and threonine 193.

Belongs to the TRAFAC class OBG-HflX-like GTPase superfamily. OBG GTPase family. Monomer. Requires Mg(2+) as cofactor.

The protein resides in the cytoplasm. In terms of biological role, an essential GTPase which binds GTP, GDP and possibly (p)ppGpp with moderate affinity, with high nucleotide exchange rates and a fairly low GTP hydrolysis rate. Plays a role in control of the cell cycle, stress response, ribosome biogenesis and in those bacteria that undergo differentiation, in morphogenesis control. The protein is GTPase Obg of Shewanella sp. (strain MR-4).